The sequence spans 275 residues: NH(3)-dependent NAD(+) synthetase (275 aa).

46–53 (GISGGQDS) lines the ATP pocket. Residue Asp-52 participates in Mg(2+) binding. Residue Arg-140 participates in deamido-NAD(+) binding. An ATP-binding site is contributed by Thr-160. Glu-165 contacts Mg(2+). Residues Lys-173 and Asp-180 each contribute to the deamido-NAD(+) site. Residues Lys-189 and Thr-211 each coordinate ATP. Residue 260–261 (HK) coordinates deamido-NAD(+).

This sequence belongs to the NAD synthetase family. Homodimer.

It carries out the reaction deamido-NAD(+) + NH4(+) + ATP = AMP + diphosphate + NAD(+) + H(+). It functions in the pathway cofactor biosynthesis; NAD(+) biosynthesis; NAD(+) from deamido-NAD(+) (ammonia route): step 1/1. Functionally, catalyzes the ATP-dependent amidation of deamido-NAD to form NAD. Uses ammonia as a nitrogen source. The protein is NH(3)-dependent NAD(+) synthetase of Salmonella choleraesuis (strain SC-B67).